The sequence spans 415 residues: Camphor 5-monooxygenase (415 aa).

C358 contributes to the heme binding site.

This sequence belongs to the cytochrome P450 family. Heme serves as cofactor.

It is found in the cytoplasm. It catalyses the reaction 2 reduced [2Fe-2S]-[putidaredoxin] + (1R,4R)-camphor + O2 + 2 H(+) = (1R,4R,5R)-5-hydroxycamphor + 2 oxidized [2Fe-2S]-[putidaredoxin] + H2O. Its pathway is terpene metabolism; (R)-camphor degradation. Its function is as follows. Involved in a camphor oxidation system. The polypeptide is Camphor 5-monooxygenase (camC) (Pseudomonas putida (Arthrobacter siderocapsulatus)).